A 309-amino-acid chain; its full sequence is Homoserine O-succinyltransferase (309 aa).

Residue cysteine 142 is the Acyl-thioester intermediate of the active site. 2 residues coordinate substrate: lysine 163 and serine 192. Catalysis depends on histidine 235, which acts as the Proton acceptor. The active site involves glutamate 237. Substrate is bound at residue arginine 249.

Belongs to the MetA family. In terms of assembly, homodimer.

It is found in the cytoplasm. The enzyme catalyses L-homoserine + succinyl-CoA = O-succinyl-L-homoserine + CoA. The protein operates within amino-acid biosynthesis; L-methionine biosynthesis via de novo pathway; O-succinyl-L-homoserine from L-homoserine: step 1/1. Transfers a succinyl group from succinyl-CoA to L-homoserine, forming succinyl-L-homoserine. This Escherichia coli O139:H28 (strain E24377A / ETEC) protein is Homoserine O-succinyltransferase.